The chain runs to 230 residues: Demethylmenaquinone methyltransferase (230 aa).

S-adenosyl-L-methionine-binding positions include threonine 57, aspartate 77, 101-102 (DI), and serine 118.

Belongs to the class I-like SAM-binding methyltransferase superfamily. MenG/UbiE family.

It catalyses the reaction a 2-demethylmenaquinol + S-adenosyl-L-methionine = a menaquinol + S-adenosyl-L-homocysteine + H(+). The protein operates within quinol/quinone metabolism; menaquinone biosynthesis; menaquinol from 1,4-dihydroxy-2-naphthoate: step 2/2. Functionally, methyltransferase required for the conversion of demethylmenaquinol (DMKH2) to menaquinol (MKH2). The chain is Demethylmenaquinone methyltransferase from Chlamydia caviae (strain ATCC VR-813 / DSM 19441 / 03DC25 / GPIC) (Chlamydophila caviae).